A 350-amino-acid chain; its full sequence is Membrane progestin receptor alpha (350 aa).

Topologically, residues 1-80 (MATMVAQKLS…HNEAVNVWTH (80 aa)) are cytoplasmic. A helical membrane pass occupies residues 81 to 101 (LLAALVLLLRLAIFVGTVDFW). Over 102–105 (GDPH) the chain is Extracellular. A helical membrane pass occupies residues 106-126 (ALPLFIIVLASFTYLSLSALA). Residues 127-139 (HLLQAKSEFWHYS) are Cytoplasmic-facing. Residues 140 to 160 (FFFLDYVGVAVYQFGSALAHF) form a helical membrane-spanning segment. The Extracellular segment spans residues 161–165 (YYAIE). Residues 166 to 186 (PAWHAQVQTIFLPMAAFLAWL) form a helical membrane-spanning segment. Residues 187-239 (SCTGSCYNKYIQKPGLLGRTCQEVPSALAYALDISPVAHRILASPEPATDDPA) are Cytoplasmic-facing. Residues 240–260 (LLYHKCQVVFFLLAAAFFSAF) form a helical membrane-spanning segment. Topologically, residues 261-278 (MPERWFPGSCHIFGQGHQ) are extracellular. A helical membrane pass occupies residues 279-299 (LFHVFLVLCTLAQLEAVALDY). The Cytoplasmic portion of the chain corresponds to 300 to 318 (EARRPIYEPLHTRWPHNFS). The helical transmembrane segment at 319-339 (GLFLLTVGSSILTAFLLSQLV) threads the bilayer. The Extracellular segment spans residues 340–350 (RRKLDLDRKTQ).

The protein belongs to the ADIPOR family.

Its subcellular location is the cell membrane. Functionally, plasma membrane progesterone (P4) receptor coupled to G proteins. Seems to act through a G(i) mediated pathway. May be involved in oocyte maturation. Involved in neurosteroid inhibition of apoptosis. Also binds dehydroepiandrosterone (DHEA), pregnanolone, pregnenolone and allopregnanolone. This Sus scrofa (Pig) protein is Membrane progestin receptor alpha (PAQR7).